The following is a 333-amino-acid chain: Small GTPase-like protein LIP2 (333 aa).

Residues 11 to 288 (NKEHMVAPLC…YKYNTLPQHN (278 aa)) form a small GTPase-like region. GTP-binding positions include 29–36 (GDSGVGKS), 90–94 (DVSGH), and 160–163 (NKAD). Polar residues predominate over residues 242–253 (SPSSAWSLSHAP). The disordered stretch occupies residues 242 to 265 (SPSSAWSLSHAPSQRLDEGTSDED).

The protein belongs to the small GTPase superfamily.

The protein is Small GTPase-like protein LIP2 of Arabidopsis thaliana (Mouse-ear cress).